The primary structure comprises 530 residues: MHQRILILDYGSQVTQLIARRVREAGVYSEIHAGDVDDAFVRDQVAQGLKGIILSGSHASAYEEGSMRVPAAVFEVGVPVLGICYGMQSMAQQLGGTVSFSDHREFGYAEVRAHGHTKLLDGLADFTTDEGHGMLKVWMSHGDKVTELPPGFKLMASTASCPIAGMADEDRGFYAVQFHPEVTHTVQGKAMLARFVKDICGCEGDWNMPDYISEAVARIREQVGSDEVILGLSGGVDSLVAAALIHRAIGDQLTCVFVDHGLLRLDEGKQVMQTFAENMGVKIVHVDATSQFMGKLTGVADPEAKRKIIGREFVEVFQDEAGKLQGAKWLAQGTIYPDVIESAGAKTGKATSIKSHHNVGGLPDTLNLQLLEPLRELFKDEVRELGVALGLPPQMVYRHPFPGPGLGVRILGEVKHEYAELLRRADAIFIEELRNAKDPASGLTWYELTSQAFAVFLPVKSVGVMGDGRTYEYVVALRAVQTFDFMTADWAPLPHPLLARVSSRIINEVRGINRVVYDVSSKPPATIEWE.

In terms of domain architecture, Glutamine amidotransferase type-1 spans 4 to 205; that stretch reads RILILDYGSQ…VKDICGCEGD (202 aa). Cys-84 functions as the Nucleophile in the catalytic mechanism. Active-site residues include His-179 and Glu-181. In terms of domain architecture, GMPS ATP-PPase spans 206-398; it reads WNMPDYISEA…LGLPPQMVYR (193 aa). An ATP-binding site is contributed by 233-239; the sequence is SGGVDSL.

Homodimer.

The catalysed reaction is XMP + L-glutamine + ATP + H2O = GMP + L-glutamate + AMP + diphosphate + 2 H(+). It functions in the pathway purine metabolism; GMP biosynthesis; GMP from XMP (L-Gln route): step 1/1. Catalyzes the synthesis of GMP from XMP. The sequence is that of GMP synthase [glutamine-hydrolyzing] from Bordetella parapertussis (strain 12822 / ATCC BAA-587 / NCTC 13253).